Here is a 249-residue protein sequence, read N- to C-terminus: MRILISNDDGVTAPGLAALYAALADYTECVVIAPEQDKSGASSSLTLDRPLHPQYLANGFISLNGTPTDCVHLGLNGLLEREPDMVVSGINLGANLGDDVLYSGTVAAALEGRFLKRPSFAFSLVSRQVDNLPTAAYFARKLVEAHAGLDLPPRTVLNVNIPNLPIDHIRGIQLTRLGHRARAAAPMKVVDPRGKAGYWIAAAGDAEDGGPGTDFHAVMQGYVSITPLQLDRTFNDAFRSLDGWLEGLN.

The a divalent metal cation site is built by Asp-8, Asp-9, Ser-39, and Asn-91.

Belongs to the SurE nucleotidase family. A divalent metal cation is required as a cofactor.

The protein localises to the cytoplasm. The enzyme catalyses a ribonucleoside 5'-phosphate + H2O = a ribonucleoside + phosphate. Functionally, nucleotidase that shows phosphatase activity on nucleoside 5'-monophosphates. This Pseudomonas fluorescens (strain Pf0-1) protein is 5'-nucleotidase SurE.